Consider the following 782-residue polypeptide: E3 ubiquitin-protein ligase SopA (782 aa).

Residues 137–171 (VSVSANNRPTVSEGRTPPVSPSLSLQATSSPSSPA) form a disordered region. Positions 157–171 (PSLSLQATSSPSSPA) are enriched in low complexity. Catalysis depends on C753, which acts as the Glycyl thioester intermediate.

The protein belongs to the SopA E3 ligase family. Post-translationally, ubiquitinated in the presence of host E1 ubiquitin-activating enzyme, E2 ubiquitin-conjugating enzyme and ubiquitin.

It is found in the secreted. The protein resides in the host cell. It catalyses the reaction S-ubiquitinyl-[E2 ubiquitin-conjugating enzyme]-L-cysteine + [acceptor protein]-L-lysine = [E2 ubiquitin-conjugating enzyme]-L-cysteine + N(6)-ubiquitinyl-[acceptor protein]-L-lysine.. Functionally, effector proteins function to alter host cell physiology and promote bacterial survival in host tissues. This protein is an E3 ubiquitin ligase that interferes with host's ubiquitination pathway. For instance, prevents host innate immune response by ubiquitinating and thus sending to degradation host E3 ubiquitin ligases TRIM56 and TRIM65. This is E3 ubiquitin-protein ligase SopA (sopA) from Salmonella typhimurium (strain 14028s / SGSC 2262).